Reading from the N-terminus, the 163-residue chain is NADH-quinone oxidoreductase subunit I (163 aa).

2 consecutive 4Fe-4S ferredoxin-type domains span residues 54-84 (LRRY…IESD) and 94-123 (TRYD…ETPI). [4Fe-4S] cluster is bound by residues cysteine 64, cysteine 67, cysteine 70, cysteine 74, cysteine 103, cysteine 106, cysteine 109, and cysteine 113.

It belongs to the complex I 23 kDa subunit family. In terms of assembly, NDH-1 is composed of 14 different subunits. Subunits NuoA, H, J, K, L, M, N constitute the membrane sector of the complex. [4Fe-4S] cluster is required as a cofactor.

Its subcellular location is the cell inner membrane. The enzyme catalyses a quinone + NADH + 5 H(+)(in) = a quinol + NAD(+) + 4 H(+)(out). In terms of biological role, NDH-1 shuttles electrons from NADH, via FMN and iron-sulfur (Fe-S) centers, to quinones in the respiratory chain. The immediate electron acceptor for the enzyme in this species is believed to be ubiquinone. Couples the redox reaction to proton translocation (for every two electrons transferred, four hydrogen ions are translocated across the cytoplasmic membrane), and thus conserves the redox energy in a proton gradient. The polypeptide is NADH-quinone oxidoreductase subunit I (Cupriavidus pinatubonensis (strain JMP 134 / LMG 1197) (Cupriavidus necator (strain JMP 134))).